The sequence spans 349 residues: Green-sensitive opsin-2 (349 aa).

The Extracellular segment spans residues 1–36 (MNGTEGNNFYIPMSNRTGLVRSPYEYTQYYLADPWQ). 2 N-linked (GlcNAc...) asparagine glycosylation sites follow: asparagine 2 and asparagine 15. The chain crosses the membrane as a helical span at residues 37-61 (FKALAFYMFFLICFGLPINVLTLLV). At 62 to 73 (TAQHKKLRQPLN) the chain is on the cytoplasmic side. Residues 74–99 (YILVNLAFAGTIMAFFGFTVTFYCSI) traverse the membrane as a helical segment. Residues 100–113 (NGYMALGPTGCAIE) lie on the Extracellular side of the membrane. A disulfide bridge connects residues cysteine 110 and cysteine 187. The helical transmembrane segment at 114-133 (GFFATLGGQVALWSLVVLAI) threads the bilayer. The Cytoplasmic portion of the chain corresponds to 134-152 (ERYIVVCKPMGSFKFSSNH). Residues 153 to 176 (AMAGIAFTWVMASSCAVPPLFGWS) form a helical membrane-spanning segment. Topologically, residues 177–202 (RYIPEGMQTSCGPDYYTLNPEFNNES) are extracellular. Asparagine 200 is a glycosylation site (N-linked (GlcNAc...) asparagine). The chain crosses the membrane as a helical span at residues 203-230 (YVLYMFSCHFCVPVTTIFFTYGSLVCTV). The Cytoplasmic segment spans residues 231-252 (KAAAAQQQESESTQKAEREVTR). A helical membrane pass occupies residues 253–276 (MVILMVLGFLVAWVPYASFAAWIF). Topologically, residues 277–284 (FNRGAAFS) are extracellular. Residues 285 to 309 (AQAMAIPAFFSKASALFNPIIYVLL) form a helical membrane-spanning segment. Lysine 296 carries the post-translational modification N6-(retinylidene)lysine. Residues 310–349 (NKQFRSCMLNTLFCGKSPLGDDESSSVSTSKTEVSSVSPA) lie on the Cytoplasmic side of the membrane. The tract at residues 328-349 (LGDDESSSVSTSKTEVSSVSPA) is disordered. Low complexity predominate over residues 334–349 (SSVSTSKTEVSSVSPA).

It belongs to the G-protein coupled receptor 1 family. Opsin subfamily. In terms of processing, phosphorylated on some or all of the serine and threonine residues present in the C-terminal region.

Its subcellular location is the membrane. Its function is as follows. Visual pigments are the light-absorbing molecules that mediate vision. They consist of an apoprotein, opsin, covalently linked to cis-retinal. This is Green-sensitive opsin-2 (opn1mw2) from Danio rerio (Zebrafish).